The primary structure comprises 489 residues: 2-(3-amino-3-carboxypropyl)histidine synthase subunit 2 (489 aa).

M1 carries the post-translational modification N-acetylmethionine. Position 7 is a phosphoserine (S7). [4Fe-4S] cluster is bound by residues C89, C110, and C341. Phosphothreonine is present on T435. A phosphoserine mark is found at S446 and S456. T467 carries the post-translational modification Phosphothreonine. The residue at position 488 (S488) is a Phosphoserine.

The protein belongs to the DPH1/DPH2 family. DPH2 subfamily. Component of the 2-(3-amino-3-carboxypropyl)histidine synthase complex composed of DPH1, DPH2, DPH3 and a NADH-dependent reductase. Interacts with DPH1. [4Fe-4S] cluster serves as cofactor.

It functions in the pathway protein modification; peptidyl-diphthamide biosynthesis. In terms of biological role, required for the first step of diphthamide biosynthesis, a post-translational modification of histidine which occurs in elongation factor 2. DPH1 and DPH2 transfer a 3-amino-3-carboxypropyl (ACP) group from S-adenosyl-L-methionine (SAM) to a histidine residue, the reaction is assisted by a reduction system comprising DPH3 and a NADH-dependent reductase. Facilitates the reduction of the catalytic iron-sulfur cluster found in the DPH1 subunit. This is 2-(3-amino-3-carboxypropyl)histidine synthase subunit 2 (Dph2) from Rattus norvegicus (Rat).